The chain runs to 391 residues: MDLTPSPRKHRSVSHSQSSDSGPPSSTKSNSGVPAGSNRKGFNINIAVSPISVSSPPVSHKHTLTRSHSHSSKHRRGSSASTNNPLPQLLEDADGPQLPEWPQPANESQGLRYNLELPSDEHLASLDIDDQLKFLALKEMGIVELKDKISQLNSILHKGEKDLHRLRELVQRSLYKEMSAGYTGSSKHVRQSSNPRDEAIASTKNRTRRRTLSSSSSPSKYLPVPEQSEPDSKSRLWSNLSKPLGFIQQFDSMLQNEFERSLIPQVSNSANPQPRTSEESYQSPLRSRSKNNDVDLPTEWTSSRSSSPQRASRNPEEMFQAVSSSIWSFVNDVRENMLPPREEEEKDKELYNLDNGSTVSVENMNNSDYDETTTETLPRRRSRQNSNAIDK.

Disordered stretches follow at residues 1 to 107 (MDLT…PANE), 181 to 235 (GYTG…SKSR), 265 to 318 (QVSN…PEEM), and 338 to 391 (LPPR…AIDK). 2 stretches are compositionally biased toward low complexity: residues 14–31 (SHSQSSDSGPPSSTKSNS) and 48–58 (VSPISVSSPPV). The span at 59–77 (SHKHTLTRSHSHSSKHRRG) shows a compositional bias: basic residues. 2 stretches are compositionally biased toward polar residues: residues 182 to 194 (YTGSSKHVRQSSN) and 265 to 286 (QVSNSANPQPRTSEESYQSPLR). A compositionally biased stretch (low complexity) spans 302–312 (SSRSSSPQRAS). The span at 338–351 (LPPREEEEKDKELY) shows a compositional bias: basic and acidic residues. Residues 354–367 (DNGSTVSVENMNNS) show a composition bias toward polar residues.

It belongs to the TDA11 family.

The protein resides in the cytoplasm. In Meyerozyma guilliermondii (strain ATCC 6260 / CBS 566 / DSM 6381 / JCM 1539 / NBRC 10279 / NRRL Y-324) (Yeast), this protein is Topoisomerase I damage affected protein 11 (TDA11).